We begin with the raw amino-acid sequence, 544 residues long: MSQSLSAEKLHFTTKLAYGAGDFGPAITANILVFYLLFFLTDVAGIPAALAGSVLMIGKIFDAINDPIIGLLSDRTRSRWGRRLPWMLGGMIPFALFYTAQWLIPHFSDDRLTNQWGLFIYYVAIAMAFNLCYTTVNLPYTALTPELTQNYNERTRLNSFRFAFSIGGSILSLILYILIAAGLPDRPQQQFGELGVMISVLSISALLWSALRLQEKGKEPILSPSLRRRLAPLLMAAGITLILLAIAKSFNLLGGSGFDYISFFLILLGLIWGGFGFTLRDSAVEEHLQKLENSPSPGVTENLPLLKQLKIAFSNRAFLFVIGIYLCSWLAVQLTASILVYFVVSWMGLNEQQSGTIALAVQGTALVMLFVWQALAQFLDKKVIYFLGSMVWMGAEAGLWLVQPGQVALLYTLAIFAGVGVSVAYLIPWSMIPDVVDLDELNTGKRREGFFYAFMVLLQKVGLALGLFLVGLTLEASGFIARIPGEPIPIQPDSALWAIRFAVAPLPAFFLLGGLILAIFYPITRAVHTDIRQQLQARQQNNHI.

14 helical membrane passes run 31–51 (ILVF…AALA), 52–72 (GSVL…IGLL), 84–104 (LPWM…QWLI), 116–136 (WGLF…YTTV), 162–182 (FAFS…IAAG), 191–211 (FGEL…WSAL), 230–250 (LAPL…AKSF), 257–277 (GFDY…GFGF), 318–338 (FLFV…TASI), 356–376 (TIAL…QALA), 383–403 (VIYF…WLVQ), 407–427 (VALL…AYLI), 450–470 (FFYA…LFLV), and 501–521 (FAVA…AIFY).

It belongs to the sodium:galactoside symporter (TC 2.A.2) family.

The protein resides in the cell membrane. This is an uncharacterized protein from Synechocystis sp. (strain ATCC 27184 / PCC 6803 / Kazusa).